The chain runs to 257 residues: UPF0246 protein PC1_3665 (257 aa).

This sequence belongs to the UPF0246 family.

This Pectobacterium carotovorum subsp. carotovorum (strain PC1) protein is UPF0246 protein PC1_3665.